A 265-amino-acid polypeptide reads, in one-letter code: Cell division protein FtsQ (265 aa).

A compositionally biased stretch (low complexity) spans 1–13 (MAGATTAKGGARR). The disordered stretch occupies residues 1–25 (MAGATTAKGGARRTPPPGPPPPALK). Residues 1–35 (MAGATTAKGGARRTPPPGPPPPALKARRRLRLPRR) lie on the Cytoplasmic side of the membrane. Over residues 14–23 (TPPPGPPPPA) the composition is skewed to pro residues. The helical transmembrane segment at 36 to 58 (RTLLVTGVATALLGSGVTWLLYG) threads the bilayer. Residues 59–265 (SSWLRVEQVA…APTAPAVTHS (207 aa)) are Extracellular-facing. A POTRA domain is found at 62–131 (LRVEQVAVSG…DTIAVRVTER (70 aa)).

It belongs to the FtsQ/DivIB family. FtsQ subfamily.

The protein localises to the cell membrane. Essential cell division protein. In Streptomyces bingchenggensis (strain BCW-1), this protein is Cell division protein FtsQ.